Here is a 161-residue protein sequence, read N- to C-terminus: UPF0178 protein BSUIS_A1819 (161 aa).

It belongs to the UPF0178 family.

This is UPF0178 protein BSUIS_A1819 from Brucella suis (strain ATCC 23445 / NCTC 10510).